The chain runs to 287 residues: 4-hydroxybenzoate octaprenyltransferase (287 aa).

The next 7 helical transmembrane spans lie at 23–40 (IGSLLLLWPTLWALWLAG), 99–119 (LFVVLVLLAFGLVLTLNTMTI), 141–161 (LPQFVLGAAFGWSIPMAYAAV), 163–183 (ESLPATCWMMFLAYICWTVAY), 213–233 (LIIGLLQFSMLALLLILGTMT), 235–255 (LGMPYYISLLVAGGMFIYQQI), and 266–286 (FKAFHNNKYAGMAIFIGVLFG).

This sequence belongs to the UbiA prenyltransferase family. It depends on Mg(2+) as a cofactor.

It localises to the cell inner membrane. It carries out the reaction all-trans-octaprenyl diphosphate + 4-hydroxybenzoate = 4-hydroxy-3-(all-trans-octaprenyl)benzoate + diphosphate. The protein operates within cofactor biosynthesis; ubiquinone biosynthesis. In terms of biological role, catalyzes the prenylation of para-hydroxybenzoate (PHB) with an all-trans polyprenyl group. Mediates the second step in the final reaction sequence of ubiquinone-8 (UQ-8) biosynthesis, which is the condensation of the polyisoprenoid side chain with PHB, generating the first membrane-bound Q intermediate 3-octaprenyl-4-hydroxybenzoate. The chain is 4-hydroxybenzoate octaprenyltransferase from Pectobacterium carotovorum subsp. carotovorum (strain PC1).